A 176-amino-acid polypeptide reads, in one-letter code: ATP synthase subunit b, chloroplastic (176 aa).

The helical transmembrane segment at 19–39 (LDLLETNIINIFILIIILIYL) threads the bilayer.

This sequence belongs to the ATPase B chain family. F-type ATPases have 2 components, F(1) - the catalytic core - and F(0) - the membrane proton channel. F(1) has five subunits: alpha(3), beta(3), gamma(1), delta(1), epsilon(1). F(0) has four main subunits: a(1), b(1), b'(1) and c(10-14). The alpha and beta chains form an alternating ring which encloses part of the gamma chain. F(1) is attached to F(0) by a central stalk formed by the gamma and epsilon chains, while a peripheral stalk is formed by the delta, b and b' chains.

It is found in the plastid. The protein localises to the chloroplast thylakoid membrane. In terms of biological role, f(1)F(0) ATP synthase produces ATP from ADP in the presence of a proton or sodium gradient. F-type ATPases consist of two structural domains, F(1) containing the extramembraneous catalytic core and F(0) containing the membrane proton channel, linked together by a central stalk and a peripheral stalk. During catalysis, ATP synthesis in the catalytic domain of F(1) is coupled via a rotary mechanism of the central stalk subunits to proton translocation. Functionally, component of the F(0) channel, it forms part of the peripheral stalk, linking F(1) to F(0). This Galdieria sulphuraria (Red alga) protein is ATP synthase subunit b, chloroplastic.